The sequence spans 324 residues: NADH-ubiquinone oxidoreductase chain 1 (324 aa).

The next 8 helical transmembrane spans lie at 3–23 (FILS…SVAF), 77–97 (ISPI…PFFV), 104–124 (LGGL…MVAG), 150–170 (LALI…IYFF), 174–194 (IYMW…TISL), 226–246 (LIFM…CVIF), 250–270 (DVFN…FIWA), and 297–317 (YLLF…WIFF).

This sequence belongs to the complex I subunit 1 family.

The protein localises to the mitochondrion inner membrane. The catalysed reaction is a ubiquinone + NADH + 5 H(+)(in) = a ubiquinol + NAD(+) + 4 H(+)(out). In terms of biological role, core subunit of the mitochondrial membrane respiratory chain NADH dehydrogenase (Complex I) that is believed to belong to the minimal assembly required for catalysis. Complex I functions in the transfer of electrons from NADH to the respiratory chain. The immediate electron acceptor for the enzyme is believed to be ubiquinone. This is NADH-ubiquinone oxidoreductase chain 1 (mt:ND1) from Drosophila yakuba (Fruit fly).